We begin with the raw amino-acid sequence, 271 residues long: Putative pyruvate, phosphate dikinase regulatory protein 1 (271 aa).

ADP is bound at residue 156–163 (GVSRTSKT).

The protein belongs to the pyruvate, phosphate/water dikinase regulatory protein family. PDRP subfamily.

It carries out the reaction N(tele)-phospho-L-histidyl/L-threonyl-[pyruvate, phosphate dikinase] + ADP = N(tele)-phospho-L-histidyl/O-phospho-L-threonyl-[pyruvate, phosphate dikinase] + AMP + H(+). The catalysed reaction is N(tele)-phospho-L-histidyl/O-phospho-L-threonyl-[pyruvate, phosphate dikinase] + phosphate + H(+) = N(tele)-phospho-L-histidyl/L-threonyl-[pyruvate, phosphate dikinase] + diphosphate. In terms of biological role, bifunctional serine/threonine kinase and phosphorylase involved in the regulation of the pyruvate, phosphate dikinase (PPDK) by catalyzing its phosphorylation/dephosphorylation. The polypeptide is Putative pyruvate, phosphate dikinase regulatory protein 1 (Staphylococcus saprophyticus subsp. saprophyticus (strain ATCC 15305 / DSM 20229 / NCIMB 8711 / NCTC 7292 / S-41)).